Consider the following 379-residue polypeptide: Caffeyl-CoA reductase-Etf complex subunit CarC (379 aa).

FAD contacts are provided by residues 122 to 131 and 155 to 157; these read FALTEPGAGS and FIT. A substrate-binding site is contributed by serine 131. Position 239-242 (239-242) interacts with substrate; the sequence is DVGR. Residues arginine 267, glutamine 278, and 335–339 contribute to the FAD site; that span reads QIHGG. Catalysis depends on glutamate 362, which acts as the Proton acceptor. Glycine 363 provides a ligand contact to substrate. 364 to 366 is a binding site for FAD; that stretch reads TSQ.

Belongs to the acyl-CoA dehydrogenase family. In terms of assembly, part of the homotrimeric caffeyl-CoA reductase-Etf complex composed of (R)-2-hydroxyisocaproyl-CoA dehydratase CarC, and the electron transfer flavoprotein (ETF) alpha (CarE) and beta (CarD) subunits. It depends on FAD as a cofactor.

It is found in the cytoplasm. It carries out the reaction hydrocaffeoyl-CoA + 2 reduced [2Fe-2S]-[ferredoxin] + 2 NAD(+) = (E)-caffeoyl-CoA + 2 oxidized [2Fe-2S]-[ferredoxin] + 2 NADH. Functionally, the Caffeyl-CoA reductase-Etf complex catalyzes the reduction of caffeyl-CoA to yield hydrocaffeyl-CoA. It couples the endergonic ferredoxin reduction with NADH as reductant to the exergonic reduction of caffeoyl-CoA with the same reductant. It uses the mechanism of electron bifurcation to overcome the steep energy barrier in ferredoxin reduction. Also reduces 4-coumaroyl-CoA and feruloyl-CoA. This is Caffeyl-CoA reductase-Etf complex subunit CarC from Acetobacterium woodii (strain ATCC 29683 / DSM 1030 / JCM 2381 / KCTC 1655 / WB1).